The chain runs to 121 residues: Large ribosomal subunit protein uL22c (121 aa).

It belongs to the universal ribosomal protein uL22 family. In terms of assembly, part of the 50S ribosomal subunit.

The protein resides in the plastid. It is found in the chloroplast. In terms of biological role, this protein binds specifically to 23S rRNA. Functionally, the globular domain of the protein is located near the polypeptide exit tunnel on the outside of the subunit, while an extended beta-hairpin is found that lines the wall of the exit tunnel in the center of the 70S ribosome. This Guillardia theta (Cryptophyte) protein is Large ribosomal subunit protein uL22c (rpl22).